Here is a 214-residue protein sequence, read N- to C-terminus: Ribosomal RNA small subunit methyltransferase G (214 aa).

S-adenosyl-L-methionine-binding positions include glycine 81, methionine 86, 132–133 (VE), and arginine 147.

The protein belongs to the methyltransferase superfamily. RNA methyltransferase RsmG family.

Its subcellular location is the cytoplasm. The catalysed reaction is guanosine(527) in 16S rRNA + S-adenosyl-L-methionine = N(7)-methylguanosine(527) in 16S rRNA + S-adenosyl-L-homocysteine. Its function is as follows. Specifically methylates the N7 position of guanine in position 527 of 16S rRNA. The protein is Ribosomal RNA small subunit methyltransferase G of Pseudomonas fluorescens (strain Pf0-1).